The primary structure comprises 101 residues: NAD(P)H-quinone oxidoreductase subunit 4L, chloroplastic (101 aa).

Helical transmembrane passes span 2–22 (MFELVLFLSVYLFSIGIYGLI), 32–52 (ICLELILNSINLNLVTFSDLF), and 61–81 (IFAIFVIALAAAEAAIGLSIL).

The protein belongs to the complex I subunit 4L family. As to quaternary structure, NDH is composed of at least 16 different subunits, 5 of which are encoded in the nucleus.

The protein resides in the plastid. It localises to the chloroplast thylakoid membrane. It catalyses the reaction a plastoquinone + NADH + (n+1) H(+)(in) = a plastoquinol + NAD(+) + n H(+)(out). The enzyme catalyses a plastoquinone + NADPH + (n+1) H(+)(in) = a plastoquinol + NADP(+) + n H(+)(out). Its function is as follows. NDH shuttles electrons from NAD(P)H:plastoquinone, via FMN and iron-sulfur (Fe-S) centers, to quinones in the photosynthetic chain and possibly in a chloroplast respiratory chain. The immediate electron acceptor for the enzyme in this species is believed to be plastoquinone. Couples the redox reaction to proton translocation, and thus conserves the redox energy in a proton gradient. In Lolium perenne (Perennial ryegrass), this protein is NAD(P)H-quinone oxidoreductase subunit 4L, chloroplastic.